We begin with the raw amino-acid sequence, 163 residues long: Large ribosomal subunit protein uL10 (163 aa).

It belongs to the universal ribosomal protein uL10 family. Part of the ribosomal stalk of the 50S ribosomal subunit. The N-terminus interacts with L11 and the large rRNA to form the base of the stalk. The C-terminus forms an elongated spine to which L12 dimers bind in a sequential fashion forming a multimeric L10(L12)X complex.

In terms of biological role, forms part of the ribosomal stalk, playing a central role in the interaction of the ribosome with GTP-bound translation factors. This chain is Large ribosomal subunit protein uL10, found in Haemophilus influenzae (strain PittGG).